The primary structure comprises 183 residues: Probable transcription termination protein NusA (183 aa).

Positions 32 to 98 (DERVAFIVKE…DDVWVKRVGK (67 aa)) constitute a KH domain. The disordered stretch occupies residues 149–183 (RKRAKRPVVKDQQQEQTETKQETDVQQDVKETVKE). Positions 156-183 (VVKDQQQEQTETKQETDVQQDVKETVKE) are enriched in basic and acidic residues.

It belongs to the NusA family.

The protein resides in the cytoplasm. Functionally, participates in transcription termination. This Methanocaldococcus jannaschii (strain ATCC 43067 / DSM 2661 / JAL-1 / JCM 10045 / NBRC 100440) (Methanococcus jannaschii) protein is Probable transcription termination protein NusA.